The chain runs to 179 residues: Large ribosomal subunit protein uL5 (179 aa).

This sequence belongs to the universal ribosomal protein uL5 family. Part of the 50S ribosomal subunit; part of the 5S rRNA/L5/L18/L25 subcomplex. Contacts the 5S rRNA and the P site tRNA. Forms a bridge to the 30S subunit in the 70S ribosome.

Functionally, this is one of the proteins that bind and probably mediate the attachment of the 5S RNA into the large ribosomal subunit, where it forms part of the central protuberance. In the 70S ribosome it contacts protein S13 of the 30S subunit (bridge B1b), connecting the 2 subunits; this bridge is implicated in subunit movement. Contacts the P site tRNA; the 5S rRNA and some of its associated proteins might help stabilize positioning of ribosome-bound tRNAs. The chain is Large ribosomal subunit protein uL5 from Pseudomonas aeruginosa (strain LESB58).